We begin with the raw amino-acid sequence, 53 residues long: UPF0391 membrane protein Bcen2424_6479 (53 aa).

A run of 2 helical transmembrane segments spans residues 5–25 (AIIF…GIAA) and 30–50 (IAKI…LLGV).

Belongs to the UPF0391 family.

The protein localises to the cell membrane. The sequence is that of UPF0391 membrane protein Bcen2424_6479 from Burkholderia cenocepacia (strain HI2424).